The chain runs to 444 residues: MRSLIAAVERIDPLTIYGRVAAVNGLLIEVRGGLTRLAVGARVEIERFGQKPLPAEVVGFRETRALLMPFGPVEGVGPGAEIRIVPEGAVVRPTKAWLGRIINAFGEPIDGLGPLPQGEVPYPLKTPPPPAHARGRVGERLDLGVRSMNVFTTTCRGQRLGIFAGSGVGKSVLLSMLAKEATCDAVVVGLIGERGREVREFVEETLGEEGLRRAVVVVATSDEPALTRRQAAYMTLAISEFMRDQDQEVLCLMDSVTRFAMAQREIGLAAGEPPTTKGYTPTVFTELPKLLERAGPGPIRPDGTTAAPITALFTVLVDGDDHNEPIADATRGILDGHIVMERAIAERGRFPAINVLKSISRTMPGCQHPHERDIVKGARQVMSAYSNMEELIRIGAYRAGADPVVDRAIRLNPAIEAFLSQDKEEATSLDDSFGMLGQILQSEY.

An ATP-binding site is contributed by 164–171 (AGSGVGKS).

Belongs to the ATPase alpha/beta chains family.

The protein resides in the cytoplasm. The catalysed reaction is ATP + H2O + 4 H(+)(in) = ADP + phosphate + 5 H(+)(out). Probable catalytic subunit of a protein translocase for flagellum-specific export, or a proton translocase involved in local circuits at the flagellum. This chain is Flagellum-specific ATP synthase (fliI), found in Caulobacter vibrioides (strain ATCC 19089 / CIP 103742 / CB 15) (Caulobacter crescentus).